The primary structure comprises 292 residues: 2-(5''-triphosphoribosyl)-3'-dephosphocoenzyme-A synthase (292 aa).

The protein belongs to the CitG/MdcB family.

It catalyses the reaction 3'-dephospho-CoA + ATP = 2'-(5''-triphospho-alpha-D-ribosyl)-3'-dephospho-CoA + adenine. Catalyzes the formation of 2-(5''-triphosphoribosyl)-3'-dephosphocoenzyme-A, the precursor of the prosthetic group of the holo-acyl carrier protein (gamma chain) of citrate lyase, from ATP and dephospho-CoA. In Escherichia coli O7:K1 (strain IAI39 / ExPEC), this protein is 2-(5''-triphosphoribosyl)-3'-dephosphocoenzyme-A synthase.